Reading from the N-terminus, the 373-residue chain is Mitochondrial nicotinamide adenine dinucleotide transporter 1 (373 aa).

The Mitochondrial matrix segment spans residues 1 to 80 (MTQTDNPVPN…WVPLSSTQIT (80 aa)). Solcar repeat units follow at residues 75–166 (SSTQ…SKKF), 174–263 (FDFV…LKVR), and 276–364 (INLQ…FRNR). Residues 81–101 (ALSGAFAGFLSGVAVCPLDVA) form a helical membrane-spanning segment. The Mitochondrial intermembrane segment spans residues 102-141 (KTRLQAQGLQTRFENPYYRGIMGTLSTIVRDEGPRGLYKG). A helical transmembrane segment spans residues 142–162 (LVPIVLGYFPTWMIYFSVYEF). The Mitochondrial matrix segment spans residues 163 to 176 (SKKFFHGIFPQFDF). The chain crosses the membrane as a helical span at residues 177–199 (VAQSCAAITAGAASTTLTNPIWV). At 200-235 (VKTRLMLQSNLGEHPTHYKGTFDAFRKLFYQEGFKA) the chain is on the mitochondrial intermembrane side. A helical membrane pass occupies residues 236 to 256 (LYAGLVPSLLGLFHVAIHFPI). Over 257-280 (YEDLKVRFHCYSRENNTNSINLQR) the chain is Mitochondrial matrix. A helical transmembrane segment spans residues 281-297 (LIMASSVSKMIASAVTY). At 298-335 (PHEILRTRMQLKSDIPDSIQRRLFPLIKATYAQEGLKG) the chain is on the mitochondrial intermembrane side. A helical transmembrane segment spans residues 336–358 (FYSGFTTNLVRTIPASAITLVSF). The Mitochondrial matrix portion of the chain corresponds to 359-373 (EYFRNRLENISTMVI).

This sequence belongs to the mitochondrial carrier (TC 2.A.29) family.

The protein resides in the mitochondrion inner membrane. The catalysed reaction is dAMP(in) + NAD(+)(out) = dAMP(out) + NAD(+)(in). It carries out the reaction dGMP(in) + NAD(+)(out) = dGMP(out) + NAD(+)(in). It catalyses the reaction GMP(in) + NAD(+)(out) = GMP(out) + NAD(+)(in). The enzyme catalyses AMP(in) + NAD(+)(out) = AMP(out) + NAD(+)(in). The catalysed reaction is deamido-NAD(+)(in) + NAD(+)(out) = deamido-NAD(+)(out) + NAD(+)(in). Its function is as follows. Mitochondrial inner membrane carrier protein that mediates the import of NAD(+) into mitochondria. Can transport NAD(+) by unidirectional transport or by exchange with intramitochondrially generated dAMP and dGMP. Also able to transport NAD(+) by exchange with AMP, GMP or deamido-NAD (+) in vitro. In Saccharomyces cerevisiae (strain ATCC 204508 / S288c) (Baker's yeast), this protein is Mitochondrial nicotinamide adenine dinucleotide transporter 1 (YIA6).